A 173-amino-acid chain; its full sequence is Shikimate kinase 1 (173 aa).

Residue 14 to 19 (GAGKST) participates in ATP binding. Residue Ser-18 participates in Mg(2+) binding. Residues Asp-36, Arg-60, and Gly-82 each coordinate substrate. Arg-120 contacts ATP. A substrate-binding site is contributed by Arg-140. Position 157 (Gln-157) interacts with ATP.

The protein belongs to the shikimate kinase family. Monomer. It depends on Mg(2+) as a cofactor.

It is found in the cytoplasm. The enzyme catalyses shikimate + ATP = 3-phosphoshikimate + ADP + H(+). It functions in the pathway metabolic intermediate biosynthesis; chorismate biosynthesis; chorismate from D-erythrose 4-phosphate and phosphoenolpyruvate: step 5/7. Its function is as follows. Catalyzes the specific phosphorylation of the 3-hydroxyl group of shikimic acid using ATP as a cosubstrate. This Shigella boydii serotype 18 (strain CDC 3083-94 / BS512) protein is Shikimate kinase 1.